A 123-amino-acid chain; its full sequence is Small ribosomal subunit protein uS12 (123 aa).

Asp-89 bears the 3-methylthioaspartic acid mark.

This sequence belongs to the universal ribosomal protein uS12 family. Part of the 30S ribosomal subunit. Contacts proteins S8 and S17. May interact with IF1 in the 30S initiation complex.

With S4 and S5 plays an important role in translational accuracy. Its function is as follows. Interacts with and stabilizes bases of the 16S rRNA that are involved in tRNA selection in the A site and with the mRNA backbone. Located at the interface of the 30S and 50S subunits, it traverses the body of the 30S subunit contacting proteins on the other side and probably holding the rRNA structure together. The combined cluster of proteins S8, S12 and S17 appears to hold together the shoulder and platform of the 30S subunit. The protein is Small ribosomal subunit protein uS12 of Desulfovibrio desulfuricans (strain ATCC 27774 / DSM 6949 / MB).